The sequence spans 73 residues: uncharacterized protein (73 aa).

Residues 1–32 are disordered; that stretch reads MFLSSAVRKDSNGVRHLPSVQRWTPGSPPTRA.

This is an uncharacterized protein from Frog virus 3 (isolate Goorha) (FV-3).